The sequence spans 710 residues: Assimilatory nitrate reductase catalytic subunit (710 aa).

One can recognise a 4Fe-4S Mo/W bis-MGD-type domain in the interval 19 to 77 (EKTYDTQCPFCSMQCKMQLVEQTIVTRKKYTAIGIDNPTTQGRLCIKGMNAHQHALNSS). [4Fe-4S] cluster contacts are provided by Cys26, Cys29, Cys33, and Cys63.

Belongs to the prokaryotic molybdopterin-containing oxidoreductase family. The cofactor is [4Fe-4S] cluster. Requires Mo-bis(molybdopterin guanine dinucleotide) as cofactor.

It functions in the pathway nitrogen metabolism; nitrate reduction (denitrification); dinitrogen from nitrate: step 1/4. Its function is as follows. Nitrate reductase is a key enzyme involved in the first step of nitrate assimilation in plants, fungi and bacteria. The protein is Assimilatory nitrate reductase catalytic subunit (nasC) of Bacillus subtilis (strain 168).